The sequence spans 177 residues: Large ribosomal subunit protein uL6 (177 aa).

Belongs to the universal ribosomal protein uL6 family. As to quaternary structure, part of the 50S ribosomal subunit.

Functionally, this protein binds to the 23S rRNA, and is important in its secondary structure. It is located near the subunit interface in the base of the L7/L12 stalk, and near the tRNA binding site of the peptidyltransferase center. The chain is Large ribosomal subunit protein uL6 from Dichelobacter nodosus (strain VCS1703A).